The primary structure comprises 486 residues: Protein nucleotidyltransferase YdiU (486 aa).

ATP contacts are provided by G90, G92, R93, K113, D125, G126, R176, and R183. D252 serves as the catalytic Proton acceptor. Mg(2+) contacts are provided by N253 and D262. D262 provides a ligand contact to ATP.

This sequence belongs to the SELO family. The cofactor is Mg(2+). Mn(2+) serves as cofactor.

It catalyses the reaction L-seryl-[protein] + ATP = 3-O-(5'-adenylyl)-L-seryl-[protein] + diphosphate. The enzyme catalyses L-threonyl-[protein] + ATP = 3-O-(5'-adenylyl)-L-threonyl-[protein] + diphosphate. It carries out the reaction L-tyrosyl-[protein] + ATP = O-(5'-adenylyl)-L-tyrosyl-[protein] + diphosphate. The catalysed reaction is L-histidyl-[protein] + UTP = N(tele)-(5'-uridylyl)-L-histidyl-[protein] + diphosphate. It catalyses the reaction L-seryl-[protein] + UTP = O-(5'-uridylyl)-L-seryl-[protein] + diphosphate. The enzyme catalyses L-tyrosyl-[protein] + UTP = O-(5'-uridylyl)-L-tyrosyl-[protein] + diphosphate. Its function is as follows. Nucleotidyltransferase involved in the post-translational modification of proteins. It can catalyze the addition of adenosine monophosphate (AMP) or uridine monophosphate (UMP) to a protein, resulting in modifications known as AMPylation and UMPylation. The polypeptide is Protein nucleotidyltransferase YdiU (Pseudomonas aeruginosa (strain LESB58)).